Reading from the N-terminus, the 430-residue chain is Enolase (430 aa).

Q163 serves as a coordination point for (2R)-2-phosphoglycerate. Residue E205 is the Proton donor of the active site. Mg(2+) is bound by residues D242, E287, and D314. Positions 339, 368, 369, and 390 each coordinate (2R)-2-phosphoglycerate. Catalysis depends on K339, which acts as the Proton acceptor.

It belongs to the enolase family. The cofactor is Mg(2+).

It is found in the cytoplasm. The protein localises to the secreted. Its subcellular location is the cell surface. The enzyme catalyses (2R)-2-phosphoglycerate = phosphoenolpyruvate + H2O. Its pathway is carbohydrate degradation; glycolysis; pyruvate from D-glyceraldehyde 3-phosphate: step 4/5. Catalyzes the reversible conversion of 2-phosphoglycerate (2-PG) into phosphoenolpyruvate (PEP). It is essential for the degradation of carbohydrates via glycolysis. The sequence is that of Enolase from Alkaliphilus metalliredigens (strain QYMF).